We begin with the raw amino-acid sequence, 134 residues long: Holo-[acyl-carrier-protein] synthase (134 aa).

Mg(2+) contacts are provided by Asp8 and Glu57.

This sequence belongs to the P-Pant transferase superfamily. AcpS family. The cofactor is Mg(2+).

The protein resides in the cytoplasm. The catalysed reaction is apo-[ACP] + CoA = holo-[ACP] + adenosine 3',5'-bisphosphate + H(+). Its function is as follows. Transfers the 4'-phosphopantetheine moiety from coenzyme A to a Ser of acyl-carrier-protein. This Rhizobium etli (strain CIAT 652) protein is Holo-[acyl-carrier-protein] synthase.